We begin with the raw amino-acid sequence, 386 residues long: Succinate--CoA ligase [ADP-forming] subunit beta (386 aa).

Residues K46, 53–55 (GRG), E99, Q102, and E107 contribute to the ATP site. Mg(2+)-binding residues include N199 and D213. Substrate contacts are provided by residues N264 and 321–323 (GIV).

Belongs to the succinate/malate CoA ligase beta subunit family. As to quaternary structure, heterotetramer of two alpha and two beta subunits. Requires Mg(2+) as cofactor.

The enzyme catalyses succinate + ATP + CoA = succinyl-CoA + ADP + phosphate. It catalyses the reaction GTP + succinate + CoA = succinyl-CoA + GDP + phosphate. It participates in carbohydrate metabolism; tricarboxylic acid cycle; succinate from succinyl-CoA (ligase route): step 1/1. Its function is as follows. Succinyl-CoA synthetase functions in the citric acid cycle (TCA), coupling the hydrolysis of succinyl-CoA to the synthesis of either ATP or GTP and thus represents the only step of substrate-level phosphorylation in the TCA. The beta subunit provides nucleotide specificity of the enzyme and binds the substrate succinate, while the binding sites for coenzyme A and phosphate are found in the alpha subunit. This chain is Succinate--CoA ligase [ADP-forming] subunit beta, found in Ruthia magnifica subsp. Calyptogena magnifica.